A 576-amino-acid chain; its full sequence is Potassium-transporting ATPase potassium-binding subunit (576 aa).

The next 12 helical transmembrane spans lie at 4–24 (QAWI…WPLG), 65–85 (AYAL…YALQ), 136–156 (ALGV…FALI), 179–199 (VYVL…QGVI), 257–277 (LSNF…VFAF), 288–308 (GALL…VTSL), 341–361 (FGIA…CGAV), 371–391 (LGGA…GGVG), 393–413 (GLYG…LMIG), 430–450 (MTAV…AVAL), 497–517 (LLLA…VLAI), and 540–560 (LFVV…YVPA).

It belongs to the KdpA family. As to quaternary structure, the system is composed of three essential subunits: KdpA, KdpB and KdpC.

The protein resides in the cell inner membrane. In terms of biological role, part of the high-affinity ATP-driven potassium transport (or Kdp) system, which catalyzes the hydrolysis of ATP coupled with the electrogenic transport of potassium into the cytoplasm. This subunit binds the periplasmic potassium ions and delivers the ions to the membrane domain of KdpB through an intramembrane tunnel. The chain is Potassium-transporting ATPase potassium-binding subunit from Methylibium petroleiphilum (strain ATCC BAA-1232 / LMG 22953 / PM1).